A 126-amino-acid polypeptide reads, in one-letter code: Small ribosomal subunit protein uS13 (126 aa).

The tract at residues 92–126 is disordered; that stretch reads HRMGLPVRGQRTRTNARTRRGRRQTVAGKKKAPGK. The segment covering 101–126 has biased composition (basic residues); that stretch reads QRTRTNARTRRGRRQTVAGKKKAPGK.

It belongs to the universal ribosomal protein uS13 family. As to quaternary structure, part of the 30S ribosomal subunit. Forms a loose heterodimer with protein S19. Forms two bridges to the 50S subunit in the 70S ribosome.

Its function is as follows. Located at the top of the head of the 30S subunit, it contacts several helices of the 16S rRNA. In the 70S ribosome it contacts the 23S rRNA (bridge B1a) and protein L5 of the 50S subunit (bridge B1b), connecting the 2 subunits; these bridges are implicated in subunit movement. Contacts the tRNAs in the A and P-sites. This chain is Small ribosomal subunit protein uS13, found in Nostoc punctiforme (strain ATCC 29133 / PCC 73102).